The chain runs to 572 residues: Methionine--tRNA ligase (572 aa).

A 'HIGH' region motif is present at residues Pro11 to Asn21. Zn(2+)-binding residues include Cys143, Cys146, Cys156, and Cys159. The 'KMSKS' region signature appears at Gln346–Ser350. ATP is bound at residue Thr349.

The protein belongs to the class-I aminoacyl-tRNA synthetase family. MetG type 1 subfamily. Monomer. It depends on Zn(2+) as a cofactor.

Its subcellular location is the cytoplasm. It catalyses the reaction tRNA(Met) + L-methionine + ATP = L-methionyl-tRNA(Met) + AMP + diphosphate. Its function is as follows. Is required not only for elongation of protein synthesis but also for the initiation of all mRNA translation through initiator tRNA(fMet) aminoacylation. The polypeptide is Methionine--tRNA ligase (Ruegeria pomeroyi (strain ATCC 700808 / DSM 15171 / DSS-3) (Silicibacter pomeroyi)).